We begin with the raw amino-acid sequence, 127 residues long: Aspartate 1-decarboxylase (127 aa).

The active-site Schiff-base intermediate with substrate; via pyruvic acid is Ser-25. Residue Ser-25 is modified to Pyruvic acid (Ser). A substrate-binding site is contributed by Thr-57. The active-site Proton donor is Tyr-58. 73–75 provides a ligand contact to substrate; the sequence is GAA.

Belongs to the PanD family. In terms of assembly, heterooctamer of four alpha and four beta subunits. Pyruvate serves as cofactor. Is synthesized initially as an inactive proenzyme, which is activated by self-cleavage at a specific serine bond to produce a beta-subunit with a hydroxyl group at its C-terminus and an alpha-subunit with a pyruvoyl group at its N-terminus.

Its subcellular location is the cytoplasm. It carries out the reaction L-aspartate + H(+) = beta-alanine + CO2. It participates in cofactor biosynthesis; (R)-pantothenate biosynthesis; beta-alanine from L-aspartate: step 1/1. Its function is as follows. Catalyzes the pyruvoyl-dependent decarboxylation of aspartate to produce beta-alanine. This is Aspartate 1-decarboxylase from Clostridium acetobutylicum (strain ATCC 824 / DSM 792 / JCM 1419 / IAM 19013 / LMG 5710 / NBRC 13948 / NRRL B-527 / VKM B-1787 / 2291 / W).